Reading from the N-terminus, the 126-residue chain is Aspartate 1-decarboxylase (126 aa).

The active-site Schiff-base intermediate with substrate; via pyruvic acid is Ser-25. Ser-25 carries the post-translational modification Pyruvic acid (Ser). Residue Thr-57 coordinates substrate. The active-site Proton donor is Tyr-58. Residue 73-75 (GAA) participates in substrate binding.

It belongs to the PanD family. In terms of assembly, heterooctamer of four alpha and four beta subunits. Pyruvate is required as a cofactor. In terms of processing, is synthesized initially as an inactive proenzyme, which is activated by self-cleavage at a specific serine bond to produce a beta-subunit with a hydroxyl group at its C-terminus and an alpha-subunit with a pyruvoyl group at its N-terminus.

It is found in the cytoplasm. The enzyme catalyses L-aspartate + H(+) = beta-alanine + CO2. The protein operates within cofactor biosynthesis; (R)-pantothenate biosynthesis; beta-alanine from L-aspartate: step 1/1. Its function is as follows. Catalyzes the pyruvoyl-dependent decarboxylation of aspartate to produce beta-alanine. In Cellvibrio japonicus (strain Ueda107) (Pseudomonas fluorescens subsp. cellulosa), this protein is Aspartate 1-decarboxylase.